We begin with the raw amino-acid sequence, 248 residues long: PF03932 family protein CutC (248 aa).

Belongs to the CutC family. As to quaternary structure, homodimer.

It is found in the cytoplasm. The sequence is that of PF03932 family protein CutC from Escherichia coli O9:H4 (strain HS).